The primary structure comprises 111 residues: Universal stress protein B (111 aa).

2 consecutive transmembrane segments (helical) span residues 1-21 and 90-110; these read MIST…NMAR and FILT…LAIW.

This sequence belongs to the universal stress protein B family.

It is found in the cell inner membrane. In Erwinia tasmaniensis (strain DSM 17950 / CFBP 7177 / CIP 109463 / NCPPB 4357 / Et1/99), this protein is Universal stress protein B.